A 385-amino-acid chain; its full sequence is Period circadian protein (385 aa).

Disordered stretches follow at residues 28 to 121 (TAPV…VPPV), 169 to 189 (GPGPGHGHGIKRGGSHSWEGE), and 322 to 351 (SPASGTSPNPRPHKHTHVHPSSEQPSTSQG). Residues 71 to 93 (SGNFTTGSNLHMSSVTNTSNAGT) show a composition bias toward low complexity. The span at 94–115 (GTSGTGNSGDGGGGGAGDGPGS) shows a compositional bias: gly residues. Residues 340 to 351 (HPSSEQPSTSQG) are compositionally biased toward polar residues.

In terms of assembly, forms a heterodimer with timeless (TIM); the complex then translocates into the nucleus. In terms of processing, phosphorylated with a circadian rhythmicity, probably by the double-time protein (dbt). Phosphorylation could be implicated in the stability of per monomer and in the formation of heterodimer per-tim.

It localises to the nucleus. Its subcellular location is the cytoplasm. The protein localises to the perinuclear region. Functionally, essential for biological clock functions. Determines the period length of circadian and ultradian rhythms; an increase in PER dosage leads to shortened circadian rhythms and a decrease leads to lengthened circadian rhythms. Essential for the circadian rhythmicity of locomotor activity, eclosion behavior, and for the rhythmic component of the male courtship song that originates in the thoracic nervous system. The biological cycle depends on the rhythmic formation and nuclear localization of the TIM-PER complex. Light induces the degradation of TIM, which promotes elimination of PER. Nuclear activity of the heterodimer coordinatively regulates PER and TIM transcription through a negative feedback loop. Behaves as a negative element in circadian transcriptional loop. Does not appear to bind DNA, suggesting indirect transcriptional inhibition. This Drosophila nebulosa (Fruit fly) protein is Period circadian protein (per).